The following is a 163-amino-acid chain: Large ribosomal subunit protein uL10 (163 aa).

The protein belongs to the universal ribosomal protein uL10 family. As to quaternary structure, part of the ribosomal stalk of the 50S ribosomal subunit. The N-terminus interacts with L11 and the large rRNA to form the base of the stalk. The C-terminus forms an elongated spine to which L12 dimers bind in a sequential fashion forming a multimeric L10(L12)X complex.

Functionally, forms part of the ribosomal stalk, playing a central role in the interaction of the ribosome with GTP-bound translation factors. The chain is Large ribosomal subunit protein uL10 from Blochmanniella pennsylvanica (strain BPEN).